Here is a 190-residue protein sequence, read N- to C-terminus: MGVKIGINQIKKDMFIVHDGQPYRVLDYDHVKPGKGQAFVRVKAKNMKTGNVIEITYKSSESIELADFEQRQMSYSYFDGDSYWFIDMNTGDMIAVPASVLGDEAQFLKEGMEVFIFLDKGQPIGVELPKSAVYEVIETEPGFKGDTATSTLKPAKIDTGATVQVPLFINEGDKIKIDTRTGKYIERVNE.

It belongs to the elongation factor P family.

The protein localises to the cytoplasm. It participates in protein biosynthesis; polypeptide chain elongation. Its function is as follows. Involved in peptide bond synthesis. Stimulates efficient translation and peptide-bond synthesis on native or reconstituted 70S ribosomes in vitro. Probably functions indirectly by altering the affinity of the ribosome for aminoacyl-tRNA, thus increasing their reactivity as acceptors for peptidyl transferase. This chain is Elongation factor P, found in Persephonella marina (strain DSM 14350 / EX-H1).